The following is a 512-amino-acid chain: 2-isopropylmalate synthase (512 aa).

In terms of domain architecture, Pyruvate carboxyltransferase spans 4–266; the sequence is IQFFDTTLRD…ETNIVLNQFK (263 aa). Residues Asp13, His201, His203, and Asn237 each contribute to the Mn(2+) site. Residues 390–512 form a regulatory domain region; it reads ELKHLQVQYV…SKQADFEEVK (123 aa).

Belongs to the alpha-IPM synthase/homocitrate synthase family. LeuA type 1 subfamily. As to quaternary structure, homodimer. Mn(2+) is required as a cofactor.

The protein localises to the cytoplasm. It carries out the reaction 3-methyl-2-oxobutanoate + acetyl-CoA + H2O = (2S)-2-isopropylmalate + CoA + H(+). The protein operates within amino-acid biosynthesis; L-leucine biosynthesis; L-leucine from 3-methyl-2-oxobutanoate: step 1/4. Its function is as follows. Catalyzes the condensation of the acetyl group of acetyl-CoA with 3-methyl-2-oxobutanoate (2-ketoisovalerate) to form 3-carboxy-3-hydroxy-4-methylpentanoate (2-isopropylmalate). The chain is 2-isopropylmalate synthase from Listeria monocytogenes serotype 4b (strain CLIP80459).